We begin with the raw amino-acid sequence, 141 residues long: Arsenate reductase (141 aa).

Residue cysteine 12 is the Nucleophile; cysteine thioarsenate intermediate of the active site.

Belongs to the ArsC family. In terms of assembly, monomer in solution.

It carries out the reaction [glutaredoxin]-dithiol + arsenate + glutathione + H(+) = glutathionyl-S-S-[glutaredoxin] + arsenite + H2O. Its activity is regulated as follows. Inhibited by the thiol reagents iodoacetate (IAA) and N-ethylmaleimide (NEM). Activity is rapidly inactivated by the histidine-modifying reagent diethylpyrocarbonate (DEPC). Involved in resistance to arsenate. Catalyzes the reduction of arsenate [As(V)] to arsenite [As(III)]. The resulting arsenite is then extruded from the cell via the ArsAB transport system. In Escherichia coli, this protein is Arsenate reductase.